We begin with the raw amino-acid sequence, 143 residues long: Type II secretion system core protein G (143 aa).

A propeptide spans 1-17 (MIKRSITRSPSRAGQAG) (leader sequence). Methionine 18 carries the post-translational modification N-methylmethionine. Residues 18-38 (MSLLEIIIVIVLIGAVLTLVG) traverse the membrane as a helical segment.

It belongs to the GSP G family. As to quaternary structure, type II secretion system is composed of four main components: the outer membrane complex, the inner membrane complex, the cytoplasmic secretion ATPase and the periplasm-spanning pseudopilus. Forms homomultimers. Interacts with pseudopilin tip complex component XpsJ as well as XpsI and XcpH. Interacts with XpsN and secretin XpsD. In terms of processing, cleaved by the prepilin peptidase. Methylated by prepilin peptidase at the amino group of the N-terminal methionine once the leader sequence is cleaved.

Its subcellular location is the cell inner membrane. Functionally, core component of the type II secretion system required for the energy-dependent secretion of extracellular factors such as proteases and toxins from the periplasm. Pseudopilin (pilin-like) protein that polymerizes to form the pseudopilus. Further polymerization triggers pseudopilus growth. This chain is Type II secretion system core protein G (xpsG), found in Xanthomonas campestris pv. campestris (strain ATCC 33913 / DSM 3586 / NCPPB 528 / LMG 568 / P 25).